A 252-amino-acid polypeptide reads, in one-letter code: Iron-sulfur cluster co-chaperone protein HscB homolog (252 aa).

The transit peptide at 1–59 directs the protein to the mitochondrion; it reads MKKTKTMVASISTLIRRTYPSTNQCNSLATIQSQTQLPRESLQHHSSAEGRLRFSGRVF. The J domain maps to 93-165; sequence DYFQIFGLEK…LSRAMYIMKL (73 aa).

The protein belongs to the HscB family. As to quaternary structure, interacts with ISU1 and HSP70-9/HSCA1.

It is found in the mitochondrion. It localises to the cytoplasm. The protein resides in the cytosol. Its function is as follows. Co-chaperone required for the assembly of iron-sulfur [Fe-S] clusters in both mitochondria and cytosol. Required for the activity of iron-sulfur proteins such as aconitase and succinate dehydrogenase. Involved in iron homeostasis and may take part in the control of iron translocation from roots to shoots. The chain is Iron-sulfur cluster co-chaperone protein HscB homolog from Arabidopsis thaliana (Mouse-ear cress).